Here is an 858-residue protein sequence, read N- to C-terminus: Bifunctional uridylyltransferase/uridylyl-removing enzyme (858 aa).

The segment at 1 to 324 (MSAHAAPSPE…PATSGITRVL (324 aa)) is uridylyltransferase. Residues 325–681 (SADRFVEKQG…ARPSPIGDAL (357 aa)) are uridylyl-removing. Residues 443-565 (VDQHILMVLR…VGNERYLTAL (123 aa)) enclose the HD domain. ACT domains lie at 682 to 763 (QVLV…PSKG) and 790 to 858 (ILSV…AIAV).

Belongs to the GlnD family. Mg(2+) is required as a cofactor.

It carries out the reaction [protein-PII]-L-tyrosine + UTP = [protein-PII]-uridylyl-L-tyrosine + diphosphate. The enzyme catalyses [protein-PII]-uridylyl-L-tyrosine + H2O = [protein-PII]-L-tyrosine + UMP + H(+). Uridylyltransferase (UTase) activity is inhibited by glutamine, while glutamine activates uridylyl-removing (UR) activity. Its function is as follows. Modifies, by uridylylation and deuridylylation, the PII regulatory proteins (GlnB and homologs), in response to the nitrogen status of the cell that GlnD senses through the glutamine level. Under low glutamine levels, catalyzes the conversion of the PII proteins and UTP to PII-UMP and PPi, while under higher glutamine levels, GlnD hydrolyzes PII-UMP to PII and UMP (deuridylylation). Thus, controls uridylylation state and activity of the PII proteins, and plays an important role in the regulation of nitrogen assimilation and metabolism. The polypeptide is Bifunctional uridylyltransferase/uridylyl-removing enzyme (Burkholderia orbicola (strain MC0-3)).